The primary structure comprises 113 residues: MNTVRATFLLVFVLAVSLGQADKDENRMEMQEKTEQGKSYLDFAENLLLQKLEELEAKLLEEDSEESRNSRQKRCIGEGVPCDENDPRCCSGLVCLKPTLHGIWYKSYYCYKK.

Residues 1-21 (MNTVRATFLLVFVLAVSLGQA) form the signal peptide. Positions 22–74 (DKDENRMEMQEKTEQGKSYLDFAENLLLQKLEELEAKLLEEDSEESRNSRQKR) are excised as a propeptide. Over residues 60–69 (LEEDSEESRN) the composition is skewed to basic and acidic residues. A disordered region spans residues 60–82 (LEEDSEESRNSRQKRCIGEGVPC). Intrachain disulfides connect Cys75–Cys90, Cys82–Cys95, and Cys89–Cys110.

The protein belongs to the neurotoxin 14 (magi-1) family. 01 (HNTX-16) subfamily. As to expression, expressed by the venom gland.

The protein localises to the secreted. In terms of biological role, probable ion channel inhibitor. This chain is U11-theraphotoxin-Hhn1a, found in Cyriopagopus hainanus (Chinese bird spider).